A 1623-amino-acid chain; its full sequence is Histone-lysine N-methyltransferase set-9 (1623 aa).

5 disordered regions span residues 1-102 (MADG…APQQ), 112-131 (AADARPLTEQEQLAAERPTE), 198-227 (EDAVGPGSPGTQYRRNQQAGGGLPSTSVAS), 448-600 (QRPG…VLRP), and 645-781 (TGQS…DEAA). Over residues 62-71 (HQMENQEFYH) the composition is skewed to basic and acidic residues. Over residues 77 to 100 (EPQQIPQIPVFQPAAYNPPNYVAP) the composition is skewed to low complexity. Positions 206–227 (PGTQYRRNQQAGGGLPSTSVAS) are enriched in polar residues. The segment covering 554-573 (MTQEEKNAHFARLTTDKEKP) has biased composition (basic and acidic residues). Residues 587–597 (PHVPPPPPPLV) show a composition bias toward pro residues. Over residues 645–669 (TGQSGSSAAARQRTVSGSAARAQTY) the composition is skewed to polar residues. The span at 723–733 (HRPRGRPKGTR) shows a compositional bias: basic residues. Residues 772 to 781 (SESEGIDEAA) are compositionally biased toward acidic residues. A PHD-type zinc finger spans residues 786–834 (TMRCHCGMDHGDGDTIECEGCKTWQHMACMGLTLKSNTSKYKCEMCLPR). The interval 857 to 895 (AARKQKRKSEPVEQKQKSSQPSTSRKSAPMALQQPAEPR) is disordered. The segment covering 873 to 882 (KSSQPSTSRK) has biased composition (polar residues). Residues 965–1056 (MSSEVKRQPG…RNTEVTLPFD (92 aa)) enclose the SET domain. Composition is skewed to basic and acidic residues over residues 1089–1157 (AERH…KKME) and 1172–1194 (AREERRIQQAEEMFRRQEEEGKR). Disordered regions lie at residues 1089 to 1318 (AERH…NVAP) and 1356 to 1623 (LLAG…TRWN). Residues 1093–1201 (RAMDHKKQEA…GKRKEARRRS (109 aa)) adopt a coiled-coil conformation. A compositionally biased stretch (polar residues) spans 1242–1252 (TTQPSTSSFAT). A compositionally biased stretch (low complexity) spans 1282 to 1293 (ATTVATPKATTA). Residues 1364–1401 (FSEVRAQIEEENRMKERSRKREAKKKAVEKEKKEHRKE) adopt a coiled-coil conformation. 4 stretches are compositionally biased toward basic and acidic residues: residues 1365–1378 (SEVRAQIEEENRMK), 1388–1406 (KKAVEKEKKEHRKEPKKTN), 1413–1429 (KSEKAVEKAVEKVEKKP), and 1447–1464 (KKTEEVDGIEREASESSS). Positions 1533-1544 (SSSNTAPTTTIA) are enriched in polar residues.

Belongs to the class V-like SAM-binding methyltransferase superfamily. In terms of tissue distribution, predominantly expressed in the germline (at protein level).

Its subcellular location is the nucleus. The enzyme catalyses L-lysyl-[histone] + S-adenosyl-L-methionine = N(6)-methyl-L-lysyl-[histone] + S-adenosyl-L-homocysteine + H(+). Functionally, histone methyltransferase. Might play a role in transcriptional regulation. Together with set-26, negatively regulates lifespan in a germline-independent, partially daf-16-dependent fashion. Together with set-26, plays a role in germline development and maintenance and might play a role in the restriction of the trimethylation mark on histone H3 'Lys-4'(H3K4me3) to target genes specifically in the germline. This Caenorhabditis elegans protein is Histone-lysine N-methyltransferase set-9.